A 590-amino-acid polypeptide reads, in one-letter code: G protein-coupled receptor kinase 5 (590 aa).

Positions 1–185 are N-terminal; it reads MELENIVANT…LERQPVTKNT (185 aa). The interval 20–39 is interaction with calmodulin; that stretch reads GGKRKGKSKKWKEILKFPHI. Positions 53–171 constitute an RGS domain; it reads YCSLCDKQPI…LDSMFFDRFL (119 aa). Residues 186–448 enclose the Protein kinase domain; it reads FRQYRVLGKG…AAEVKRHPFF (263 aa). ATP-binding positions include 192 to 200 and lysine 215; that span reads LGKGGFGEV. The active-site Proton acceptor is aspartate 311. The Nuclear localization signal motif lies at 388 to 395; sequence RKEKVKRE. The region spanning 449–514 is the AGC-kinase C-terminal domain; that stretch reads RNMNFKRLEA…GSVSIPWQNE (66 aa). Serine 484 carries the post-translational modification Phosphoserine; by autocatalysis. Threonine 485 is modified (phosphothreonine; by autocatalysis). Positions 531–590 are disordered; sequence GTLPPDLNRNHPPEPPKKGLLQRLFKRQHQNNSKSSPSSKTSFNHHINSNHVSSNSTGSS. A compositionally biased stretch (basic and acidic residues) spans 538–547; it reads NRNHPPEPPK. Positions 546–565 are sufficient for membrane localization; sequence PKKGLLQRLFKRQHQNNSKS. Positions 563 to 590 are enriched in low complexity; the sequence is SKSSPSSKTSFNHHINSNHVSSNSTGSS. Phosphoserine is present on serine 579.

Belongs to the protein kinase superfamily. AGC Ser/Thr protein kinase family. GPRK subfamily. Interacts with ST13 (via the C-terminus 303-319 AA). Interacts with TP53/p53. Interacts with HTR4 (via C-terminus 330-346 AA); this interaction is promoted by 5-HT (serotonin). Interacts with HDAC5. Interacts with GIT1. Post-translationally, autophosphorylated. Autophosphorylation may play a critical role in the regulation of GRK5 kinase activity. Highest levels in heart, placenta, lung &gt; skeletal muscle &gt; brain, liver, pancreas &gt; kidney.

Its subcellular location is the cytoplasm. It localises to the nucleus. The protein localises to the cell membrane. The catalysed reaction is [G-protein-coupled receptor] + ATP = [G-protein-coupled receptor]-phosphate + ADP + H(+). Inhibited by calmodulin with an IC(50) of 50 nM. Calmodulin inhibits GRK5 association with receptor and phospholipid. Functionally, serine/threonine kinase that phosphorylates preferentially the activated forms of a variety of G-protein-coupled receptors (GPCRs). Such receptor phosphorylation initiates beta-arrestin-mediated receptor desensitization, internalization, and signaling events leading to their down-regulation. Phosphorylates a variety of GPCRs, including adrenergic receptors, muscarinic acetylcholine receptors (more specifically Gi-coupled M2/M4 subtypes), dopamine receptors and opioid receptors. In addition to GPCRs, also phosphorylates various substrates: Hsc70-interacting protein/ST13, TP53/p53, HDAC5, and arrestin-1/ARRB1. Phosphorylation of ARRB1 by GRK5 inhibits G-protein independent MAPK1/MAPK3 signaling downstream of 5HT4-receptors. Phosphorylation of HDAC5, a repressor of myocyte enhancer factor 2 (MEF2) leading to nuclear export of HDAC5 and allowing MEF2-mediated transcription. Phosphorylation of TP53/p53, a crucial tumor suppressor, inhibits TP53/p53-mediated apoptosis. Phosphorylation of ST13 regulates internalization of the chemokine receptor. Phosphorylates rhodopsin (RHO) (in vitro) and a non G-protein-coupled receptor, LRP6 during Wnt signaling (in vitro). The polypeptide is G protein-coupled receptor kinase 5 (GRK5) (Homo sapiens (Human)).